A 162-amino-acid polypeptide reads, in one-letter code: Phosphopantetheine adenylyltransferase (162 aa).

Residue Ser-9 coordinates substrate. Residues 9–10 (SF) and His-17 each bind ATP. Lys-41, Thr-73, and Arg-87 together coordinate substrate. Residues 88 to 90 (GLR), Glu-98, and 122 to 128 (NQNISSS) each bind ATP.

The protein belongs to the bacterial CoaD family. As to quaternary structure, homohexamer. Requires Mg(2+) as cofactor.

It is found in the cytoplasm. The catalysed reaction is (R)-4'-phosphopantetheine + ATP + H(+) = 3'-dephospho-CoA + diphosphate. It participates in cofactor biosynthesis; coenzyme A biosynthesis; CoA from (R)-pantothenate: step 4/5. Its function is as follows. Reversibly transfers an adenylyl group from ATP to 4'-phosphopantetheine, yielding dephospho-CoA (dPCoA) and pyrophosphate. The polypeptide is Phosphopantetheine adenylyltransferase (Leuconostoc mesenteroides subsp. mesenteroides (strain ATCC 8293 / DSM 20343 / BCRC 11652 / CCM 1803 / JCM 6124 / NCDO 523 / NBRC 100496 / NCIMB 8023 / NCTC 12954 / NRRL B-1118 / 37Y)).